The primary structure comprises 219 residues: 7-cyano-7-deazaguanine synthase (219 aa).

Residue 10–20 participates in ATP binding; it reads FSGGQDSTTCL. Zn(2+)-binding residues include Cys188, Cys197, Cys200, and Cys203.

The protein belongs to the QueC family. As to quaternary structure, homodimer. Requires Zn(2+) as cofactor.

It catalyses the reaction 7-carboxy-7-deazaguanine + NH4(+) + ATP = 7-cyano-7-deazaguanine + ADP + phosphate + H2O + H(+). Its pathway is purine metabolism; 7-cyano-7-deazaguanine biosynthesis. Its function is as follows. Catalyzes the ATP-dependent conversion of 7-carboxy-7-deazaguanine (CDG) to 7-cyano-7-deazaguanine (preQ(0)). This is 7-cyano-7-deazaguanine synthase from Clostridium botulinum (strain Loch Maree / Type A3).